A 273-amino-acid polypeptide reads, in one-letter code: Glutamate 5-kinase (273 aa).

Lys-15 lines the ATP pocket. Substrate is bound by residues Ser-55, Asp-142, and Asn-158. ATP-binding positions include Ser-178 to Asp-179 and Thr-220 to Lys-226.

Belongs to the glutamate 5-kinase family.

It is found in the cytoplasm. The catalysed reaction is L-glutamate + ATP = L-glutamyl 5-phosphate + ADP. The protein operates within amino-acid biosynthesis; L-proline biosynthesis; L-glutamate 5-semialdehyde from L-glutamate: step 1/2. Its function is as follows. Catalyzes the transfer of a phosphate group to glutamate to form L-glutamate 5-phosphate. The polypeptide is Glutamate 5-kinase (Streptococcus pyogenes serotype M3 (strain ATCC BAA-595 / MGAS315)).